Here is a 743-residue protein sequence, read N- to C-terminus: Phosphoribosylformylglycinamidine synthase subunit PurL (743 aa).

The active site involves histidine 53. Residues tyrosine 56 and lysine 95 each coordinate ATP. Glutamate 97 provides a ligand contact to Mg(2+). Residues 98–101 (SHNH) and arginine 120 contribute to the substrate site. Residue histidine 99 is the Proton acceptor of the active site. Position 121 (aspartate 121) interacts with Mg(2+). Glutamine 245 contacts substrate. Aspartate 275 is a binding site for Mg(2+). 319–321 (ESQ) lines the substrate pocket. Aspartate 502 and glycine 539 together coordinate ATP. Mg(2+) is bound at residue asparagine 540. Serine 542 contributes to the substrate binding site.

The protein belongs to the FGAMS family. Monomer. Part of the FGAM synthase complex composed of 1 PurL, 1 PurQ and 2 PurS subunits.

Its subcellular location is the cytoplasm. The enzyme catalyses N(2)-formyl-N(1)-(5-phospho-beta-D-ribosyl)glycinamide + L-glutamine + ATP + H2O = 2-formamido-N(1)-(5-O-phospho-beta-D-ribosyl)acetamidine + L-glutamate + ADP + phosphate + H(+). Its pathway is purine metabolism; IMP biosynthesis via de novo pathway; 5-amino-1-(5-phospho-D-ribosyl)imidazole from N(2)-formyl-N(1)-(5-phospho-D-ribosyl)glycinamide: step 1/2. In terms of biological role, part of the phosphoribosylformylglycinamidine synthase complex involved in the purines biosynthetic pathway. Catalyzes the ATP-dependent conversion of formylglycinamide ribonucleotide (FGAR) and glutamine to yield formylglycinamidine ribonucleotide (FGAM) and glutamate. The FGAM synthase complex is composed of three subunits. PurQ produces an ammonia molecule by converting glutamine to glutamate. PurL transfers the ammonia molecule to FGAR to form FGAM in an ATP-dependent manner. PurS interacts with PurQ and PurL and is thought to assist in the transfer of the ammonia molecule from PurQ to PurL. The chain is Phosphoribosylformylglycinamidine synthase subunit PurL from Lactobacillus helveticus (strain DPC 4571).